We begin with the raw amino-acid sequence, 123 residues long: UPF0738 protein BcerKBAB4_1107 (123 aa).

The protein belongs to the UPF0738 family.

The sequence is that of UPF0738 protein BcerKBAB4_1107 from Bacillus mycoides (strain KBAB4) (Bacillus weihenstephanensis).